A 475-amino-acid chain; its full sequence is Legumain (475 aa).

A signal peptide spans 1 to 15 (MVMMLVMLSLHGTAA). Residues 16–35 (RLNRREWDSVIQLPTEPVDD) constitute a propeptide that is removed on maturation. Residue His158 is part of the active site. Cys200 serves as the catalytic Nucleophile. A disulfide bond links Cys233 and Cys247. Residue Asn300 is glycosylated (N-linked (GlcNAc...) asparagine). Disulfide bonds link Cys411-Cys441 and Cys423-Cys458.

It belongs to the peptidase C13 family. As to quaternary structure, homodimer.

The catalysed reaction is Hydrolysis of proteins and small molecule substrates at -Asn-|-Xaa- bonds.. With respect to regulation, repressed by various protease inhibitors including p-chloromercuribenzene sulfonic acid (PCMBS), N-ethylmaleimide, kininogen, elastatinal, cystatin EW and leupeptin. In terms of biological role, asparaginyl endopeptidase able to cleave almost all peptide bonds on the carboxyl side of Asn residues, except at the NH2 terminus or second position or with N-glycosylated Asn. Responsible for the maturation (circular permutation) of concanavalin A from its precursor, by performing both cleavage and cleavage-coupled transpeptidation to form conA. The protein is Legumain of Canavalia ensiformis (Jack bean).